A 219-amino-acid polypeptide reads, in one-letter code: Large ribosomal subunit protein bL25 (219 aa).

The segment at 188-219 is disordered; sequence TVAAPADTAVQPESSSTKGKKDEDGALAKDKK. Basic and acidic residues predominate over residues 206 to 219; the sequence is GKKDEDGALAKDKK.

This sequence belongs to the bacterial ribosomal protein bL25 family. CTC subfamily. In terms of assembly, part of the 50S ribosomal subunit; part of the 5S rRNA/L5/L18/L25 subcomplex. Contacts the 5S rRNA. Binds to the 5S rRNA independently of L5 and L18.

Its function is as follows. This is one of the proteins that binds to the 5S RNA in the ribosome where it forms part of the central protuberance. In Elusimicrobium minutum (strain Pei191), this protein is Large ribosomal subunit protein bL25.